A 395-amino-acid polypeptide reads, in one-letter code: Argininosuccinate synthase (395 aa).

An ATP-binding site is contributed by 8-16; sequence AYSGGLDTS. Residues tyrosine 86 and serine 91 each contribute to the L-citrulline site. Glycine 116 is an ATP binding site. Threonine 118, asparagine 122, and aspartate 123 together coordinate L-aspartate. Residue asparagine 122 participates in L-citrulline binding. The L-citrulline site is built by arginine 126, serine 172, serine 181, glutamate 257, and tyrosine 269.

This sequence belongs to the argininosuccinate synthase family. Type 1 subfamily. As to quaternary structure, homotetramer.

Its subcellular location is the cytoplasm. The enzyme catalyses L-citrulline + L-aspartate + ATP = 2-(N(omega)-L-arginino)succinate + AMP + diphosphate + H(+). The protein operates within amino-acid biosynthesis; L-arginine biosynthesis; L-arginine from L-ornithine and carbamoyl phosphate: step 2/3. This is Argininosuccinate synthase from Methanosarcina barkeri (strain Fusaro / DSM 804).